Here is a 339-residue protein sequence, read N- to C-terminus: Ketol-acid reductoisomerase (NADP(+)) (339 aa).

Positions 1–182 constitute a KARI N-terminal Rossmann domain; the sequence is MKVYYDADCD…GGGRSGIIET (182 aa). NADP(+)-binding positions include 24-27, Arg48, Ser51, Ser53, and 83-86; these read YGSQ and DEHQ. His108 is an active-site residue. Gly134 is a binding site for NADP(+). One can recognise a KARI C-terminal knotted domain in the interval 183 to 328; it reads NFREECETDL…AKLRAMMPWI (146 aa). Asp191, Glu195, Glu227, and Glu231 together coordinate Mg(2+). Ser252 contacts substrate.

The protein belongs to the ketol-acid reductoisomerase family. It depends on Mg(2+) as a cofactor.

It catalyses the reaction (2R)-2,3-dihydroxy-3-methylbutanoate + NADP(+) = (2S)-2-acetolactate + NADPH + H(+). The catalysed reaction is (2R,3R)-2,3-dihydroxy-3-methylpentanoate + NADP(+) = (S)-2-ethyl-2-hydroxy-3-oxobutanoate + NADPH + H(+). It functions in the pathway amino-acid biosynthesis; L-isoleucine biosynthesis; L-isoleucine from 2-oxobutanoate: step 2/4. It participates in amino-acid biosynthesis; L-valine biosynthesis; L-valine from pyruvate: step 2/4. Functionally, involved in the biosynthesis of branched-chain amino acids (BCAA). Catalyzes an alkyl-migration followed by a ketol-acid reduction of (S)-2-acetolactate (S2AL) to yield (R)-2,3-dihydroxy-isovalerate. In the isomerase reaction, S2AL is rearranged via a Mg-dependent methyl migration to produce 3-hydroxy-3-methyl-2-ketobutyrate (HMKB). In the reductase reaction, this 2-ketoacid undergoes a metal-dependent reduction by NADPH to yield (R)-2,3-dihydroxy-isovalerate. In Novosphingobium aromaticivorans (strain ATCC 700278 / DSM 12444 / CCUG 56034 / CIP 105152 / NBRC 16084 / F199), this protein is Ketol-acid reductoisomerase (NADP(+)).